The chain runs to 298 residues: Oxidoreductase YdhF (298 aa).

Tyr55 acts as the Proton donor in catalysis. Residues 158 to 159 (SN), 209 to 220 (WSCLGGGRLFND), and 263 to 264 (SG) each bind NADP(+).

This sequence belongs to the aldo/keto reductase family. Aldo/keto reductase 2 subfamily.

In terms of biological role, may function as oxidoreductase. The protein is Oxidoreductase YdhF (ydhF) of Escherichia coli (strain K12).